The following is a 450-amino-acid chain: 3-phosphoshikimate 1-carboxyvinyltransferase (450 aa).

A disordered region spans residues 1-23 (MSSHGAPIPMTSSACGPLTGEAR). K28, S29, and R33 together coordinate 3-phosphoshikimate. Residue K28 participates in phosphoenolpyruvate binding. Residues G101 and R129 each contribute to the phosphoenolpyruvate site. 3-phosphoshikimate-binding residues include S174, Q176, D327, and K354. Position 176 (Q176) interacts with phosphoenolpyruvate. Catalysis depends on D327, which acts as the Proton acceptor. Phosphoenolpyruvate is bound by residues R358 and R403.

The protein belongs to the EPSP synthase family. Monomer.

Its subcellular location is the cytoplasm. It catalyses the reaction 3-phosphoshikimate + phosphoenolpyruvate = 5-O-(1-carboxyvinyl)-3-phosphoshikimate + phosphate. It functions in the pathway metabolic intermediate biosynthesis; chorismate biosynthesis; chorismate from D-erythrose 4-phosphate and phosphoenolpyruvate: step 6/7. Its function is as follows. Catalyzes the transfer of the enolpyruvyl moiety of phosphoenolpyruvate (PEP) to the 5-hydroxyl of shikimate-3-phosphate (S3P) to produce enolpyruvyl shikimate-3-phosphate and inorganic phosphate. The protein is 3-phosphoshikimate 1-carboxyvinyltransferase of Roseobacter denitrificans (strain ATCC 33942 / OCh 114) (Erythrobacter sp. (strain OCh 114)).